Reading from the N-terminus, the 89-residue chain is Large ribosomal subunit protein bL27 (89 aa).

The segment at methionine 1–leucine 21 is disordered.

The protein belongs to the bacterial ribosomal protein bL27 family.

The sequence is that of Large ribosomal subunit protein bL27 from Bradyrhizobium diazoefficiens (strain JCM 10833 / BCRC 13528 / IAM 13628 / NBRC 14792 / USDA 110).